The following is a 371-amino-acid chain: MAQNPNLAALSAAGVSVWLDDLSRDRLQTGNLTELINTRSVVGVTTNPSIFQAALSKGTAYDAQVNELAARGADVDATIRTVTTDDVRNACDLLAKEYEASDGVDGRVSIEVDPRLAHDTDKTILQAIELWKIVDRPNLLIKIPATMAGLPAISAVIAEGISVNVTLIFSVERHRLVMDAYLEGLEKAKEAGHDLSKIHSVASFFVSRVDTEIDARLEKIGSDEALALRGKAGVANARLAYAAYEEVFGSDRFAKLKADGARVQRPLWASTGVKNPEYSDTLYVTELVAPNTVNTMPEKTLEAVADHGEITGNTIAGTAASSQETFDKLAAIGIDLPDVFRVLEDEGVEKFEKSWQELLDATQGQLDAAKK.

Lys132 is covalently cross-linked (Isoglutamyl lysine isopeptide (Lys-Gln) (interchain with Q-Cter in protein Pup)). Lys142 (schiff-base intermediate with substrate) is an active-site residue.

The protein belongs to the transaldolase family. Type 2 subfamily.

It localises to the cytoplasm. It carries out the reaction D-sedoheptulose 7-phosphate + D-glyceraldehyde 3-phosphate = D-erythrose 4-phosphate + beta-D-fructose 6-phosphate. It participates in carbohydrate degradation; pentose phosphate pathway; D-glyceraldehyde 3-phosphate and beta-D-fructose 6-phosphate from D-ribose 5-phosphate and D-xylulose 5-phosphate (non-oxidative stage): step 2/3. Its function is as follows. Transaldolase is important for the balance of metabolites in the pentose-phosphate pathway. In Mycolicibacterium smegmatis (strain ATCC 700084 / mc(2)155) (Mycobacterium smegmatis), this protein is Transaldolase (tal).